The sequence spans 560 residues: Thermosome subunit alpha (560 aa).

Over residues 535 to 547 the composition is skewed to basic and acidic residues; it reads SEKKGGEGSKEES. The tract at residues 535–560 is disordered; it reads SEKKGGEGSKEESGGEGGAGTPSLGD.

Belongs to the TCP-1 chaperonin family. Forms a heterooligomeric complex of two stacked nine-membered rings; one of alpha and the other of beta subunits. Sometimes called a 'rosettasome'.

It localises to the cytoplasm. The catalysed reaction is ATP + H2O = ADP + phosphate + H(+). Functionally, molecular chaperone; binds unfolded polypeptides in vitro, stimulates protein folding and has ATPase activity. One of the most abundant proteins in the cell at all temperatures. The polypeptide is Thermosome subunit alpha (thsA) (Saccharolobus shibatae (strain ATCC 51178 / DSM 5389 / JCM 8931 / NBRC 15437 / B12) (Sulfolobus shibatae)).